We begin with the raw amino-acid sequence, 346 residues long: 2-oxoglutarate synthase subunit KorA (346 aa).

In terms of assembly, heterotetramer of the KorA, KorB, KorC and KorD subunits.

The catalysed reaction is 2 oxidized [2Fe-2S]-[ferredoxin] + 2-oxoglutarate + CoA = succinyl-CoA + 2 reduced [2Fe-2S]-[ferredoxin] + CO2 + H(+). The sequence is that of 2-oxoglutarate synthase subunit KorA (korA) from Archaeoglobus fulgidus (strain ATCC 49558 / DSM 4304 / JCM 9628 / NBRC 100126 / VC-16).